We begin with the raw amino-acid sequence, 347 residues long: NADH-quinone oxidoreductase subunit H 1 (347 aa).

9 helical membrane-spanning segments follow: residues 14–34 (IMIG…AYVL), 50–70 (PNVV…KFVF), 83–103 (IFLL…AVIP), 115–135 (VGIL…IMGG), 161–181 (IGFV…TDIV), 198–218 (FLDW…ISAL), 258–278 (AICL…LPPV), 286–306 (VPGI…FAMV), and 321–341 (LGWK…AFVL).

The protein belongs to the complex I subunit 1 family. NDH-1 is composed of 14 different subunits. Subunits NuoA, H, J, K, L, M, N constitute the membrane sector of the complex.

The protein resides in the cell inner membrane. It carries out the reaction a quinone + NADH + 5 H(+)(in) = a quinol + NAD(+) + 4 H(+)(out). NDH-1 shuttles electrons from NADH, via FMN and iron-sulfur (Fe-S) centers, to quinones in the respiratory chain. The immediate electron acceptor for the enzyme in this species is believed to be ubiquinone. Couples the redox reaction to proton translocation (for every two electrons transferred, four hydrogen ions are translocated across the cytoplasmic membrane), and thus conserves the redox energy in a proton gradient. This subunit may bind ubiquinone. The chain is NADH-quinone oxidoreductase subunit H 1 from Rhizobium meliloti (strain 1021) (Ensifer meliloti).